A 425-amino-acid chain; its full sequence is Ribulose bisphosphate carboxylase/oxygenase activase B, chloroplastic (425 aa).

A chloroplast-targeting transit peptide spans 1-43; it reads MASAFSSTVGAPASTPTIFLGKKVKNYYHGGNKMKSRVVRVMA. Position 153–160 (153–160) interacts with ATP; that stretch reads GGKGQGKS.

This sequence belongs to the RuBisCO activase family.

It is found in the plastid. It localises to the chloroplast stroma. Activation of RuBisCO (ribulose-1,5-bisphosphate carboxylase/oxygenase; EC 4.1.1.39) involves the ATP-dependent carboxylation of the epsilon-amino group of lysine leading to a carbamate structure. The protein is Ribulose bisphosphate carboxylase/oxygenase activase B, chloroplastic (RCAB) of Hordeum vulgare (Barley).